The sequence spans 417 residues: Adenylosuccinate synthetase (417 aa).

GTP-binding positions include 11–17 (GDEGKGK) and 39–41 (GHT). Aspartate 12 (proton acceptor) is an active-site residue. Residues aspartate 12 and glycine 39 each contribute to the Mg(2+) site. IMP-binding positions include 12 to 15 (DEGK), 37 to 40 (NAGH), threonine 126, arginine 140, glutamine 218, threonine 233, and arginine 295. Histidine 40 functions as the Proton donor in the catalytic mechanism. Residue 291–297 (TVSGRIR) coordinates substrate. GTP contacts are provided by residues arginine 297, 323 to 325 (KLD), and 406 to 408 (SNG).

This sequence belongs to the adenylosuccinate synthetase family. Homodimer. The cofactor is Mg(2+).

The protein resides in the cytoplasm. It catalyses the reaction IMP + L-aspartate + GTP = N(6)-(1,2-dicarboxyethyl)-AMP + GDP + phosphate + 2 H(+). It functions in the pathway purine metabolism; AMP biosynthesis via de novo pathway; AMP from IMP: step 1/2. Its function is as follows. Plays an important role in the de novo pathway of purine nucleotide biosynthesis. Catalyzes the first committed step in the biosynthesis of AMP from IMP. The polypeptide is Adenylosuccinate synthetase (Neorickettsia sennetsu (strain ATCC VR-367 / Miyayama) (Ehrlichia sennetsu)).